We begin with the raw amino-acid sequence, 309 residues long: UDP-3-O-acyl-N-acetylglucosamine deacetylase (309 aa).

3 residues coordinate Zn(2+): H78, H237, and D241. H264 acts as the Proton donor in catalysis.

This sequence belongs to the LpxC family. It depends on Zn(2+) as a cofactor.

It carries out the reaction a UDP-3-O-[(3R)-3-hydroxyacyl]-N-acetyl-alpha-D-glucosamine + H2O = a UDP-3-O-[(3R)-3-hydroxyacyl]-alpha-D-glucosamine + acetate. The protein operates within glycolipid biosynthesis; lipid IV(A) biosynthesis; lipid IV(A) from (3R)-3-hydroxytetradecanoyl-[acyl-carrier-protein] and UDP-N-acetyl-alpha-D-glucosamine: step 2/6. Catalyzes the hydrolysis of UDP-3-O-myristoyl-N-acetylglucosamine to form UDP-3-O-myristoylglucosamine and acetate, the committed step in lipid A biosynthesis. The polypeptide is UDP-3-O-acyl-N-acetylglucosamine deacetylase (Methylobacillus flagellatus (strain ATCC 51484 / DSM 6875 / VKM B-1610 / KT)).